The chain runs to 413 residues: Docking protein 2 (413 aa).

Residues 4–114 (VVVKQGFLYL…WIQAICLLAF (111 aa)) enclose the PH domain. An IRS-type PTB domain is found at 147-252 (PQKEFAVTVR…SAQKNAAPPG (106 aa)). Positions 247–292 (NAAPPGPQTQPVPVPAVLPRPESPYARPHDSLPPPSPTVPVPTPRQ) are disordered. Positions 250 to 268 (PPGPQTQPVPVPAVLPRPE) are enriched in pro residues. Tyr271 is modified (phosphotyrosine). Residues 277–289 (SLPPPSPTVPVPT) show a composition bias toward pro residues. Residues Tyr300 and Tyr346 each carry the phosphotyrosine modification. The span at 362–381 (QEPRGEAWRRQATADRDSSG) shows a compositional bias: basic and acidic residues. Positions 362–383 (QEPRGEAWRRQATADRDSSGLK) are disordered.

This sequence belongs to the DOK family. Type A subfamily. Interacts with phosphorylated RASGAP and EGFR. Interacts with RET and NCK. Interacts (via PH domain) with TEK/TIE2 (tyrosine phosphorylated). On immunoreceptor stimulation, phosphorylated on C-terminal tyrosine residues. Phosphorylation on Tyr-346 is required for binding to the SH2 domain of NCK. Phosphorylation on both Tyr-271 and Tyr-300 is required for interaction with RASGAP. Phosphorylated on tyrosine residues by TEK/TIE2.

In terms of biological role, DOK proteins are enzymatically inert adaptor or scaffolding proteins. They provide a docking platform for the assembly of multimolecular signaling complexes. DOK2 may modulate the cellular proliferation induced by IL-4, as well as IL-2 and IL-3. May be involved in modulating Bcr-Abl signaling. Attenuates EGF-stimulated MAP kinase activation. In Bos taurus (Bovine), this protein is Docking protein 2 (DOK2).